Reading from the N-terminus, the 141-residue chain is Transcriptional regulator MraZ (141 aa).

SpoVT-AbrB domains are found at residues 5–47 and 75–118; these read EYNH…PNEE and AADC…SKER.

The protein belongs to the MraZ family. Forms oligomers.

The protein localises to the cytoplasm. The protein resides in the nucleoid. The sequence is that of Transcriptional regulator MraZ from Lachnoclostridium phytofermentans (strain ATCC 700394 / DSM 18823 / ISDg) (Clostridium phytofermentans).